The following is a 67-amino-acid chain: Large ribosomal subunit protein bL35 (67 aa).

A compositionally biased stretch (basic residues) spans 1 to 16 (MPKMKTKSSAKKRFRV). The segment at 1–24 (MPKMKTKSSAKKRFRVRPGGTVKR) is disordered.

It belongs to the bacterial ribosomal protein bL35 family.

This chain is Large ribosomal subunit protein bL35, found in Paracidovorax citrulli (strain AAC00-1) (Acidovorax citrulli).